The sequence spans 290 residues: 33 kDa chaperonin (290 aa).

Intrachain disulfides connect cysteine 235–cysteine 237 and cysteine 268–cysteine 271.

Belongs to the HSP33 family. Under oxidizing conditions two disulfide bonds are formed involving the reactive cysteines. Under reducing conditions zinc is bound to the reactive cysteines and the protein is inactive.

The protein resides in the cytoplasm. Its function is as follows. Redox regulated molecular chaperone. Protects both thermally unfolding and oxidatively damaged proteins from irreversible aggregation. Plays an important role in the bacterial defense system toward oxidative stress. In Streptococcus equi subsp. equi (strain 4047), this protein is 33 kDa chaperonin.